Reading from the N-terminus, the 338-residue chain is Fructose-1,6-bisphosphatase class 1 (338 aa).

Mg(2+) is bound by residues glutamate 91, aspartate 113, leucine 115, and aspartate 116. Residues 116–119 (DGSS), asparagine 208, and lysine 274 each bind substrate. Glutamate 280 is a binding site for Mg(2+).

Belongs to the FBPase class 1 family. In terms of assembly, homotetramer. The cofactor is Mg(2+).

It localises to the cytoplasm. It catalyses the reaction beta-D-fructose 1,6-bisphosphate + H2O = beta-D-fructose 6-phosphate + phosphate. The protein operates within carbohydrate biosynthesis; gluconeogenesis. In Ralstonia pickettii (strain 12J), this protein is Fructose-1,6-bisphosphatase class 1.